The following is a 395-amino-acid chain: GA-binding protein subunit beta-1 (395 aa).

S2 carries the post-translational modification N-acetylserine. ANK repeat units lie at residues 5–34 (DLGKKLLEAARAGQDDEVRILMANGAPFTT) and 37–66 (LGTSPLHLAAQYGHYSTTEVLLRAGVSRDA). At K69 the chain carries N6-acetyllysine. ANK repeat units lie at residues 70–99 (VDRTPLHMAASEGHASIVEVLLKHGADVNA), 103–132 (LKMTALHWATEHNHQEVVELLIKYGADVHT), and 136–166 (FCKTAFDISIDNGNEDLAEILQIAMQNQINT). Residues 258-327 (DGAIQQVVSS…ETVISEEPPA (70 aa)) are transcription activation and HCFC1 interaction. N6-acetyllysine occurs at positions 352 and 381.

Heterotetramer of two alpha and two beta subunits. Interacts with HCFC1, causing repression of transcriptional activity. Post-translationally, acetylated by EP300/p300. Deacetylated by SIRT7, promoting heterotetramerization and activity.

The protein localises to the nucleus. In terms of biological role, transcription factor capable of interacting with purine rich repeats (GA repeats). Acts as a master regulator of nuclear-encoded mitochondrial genes. Its function is as follows. (Microbial infection) Necessary for the expression of the Adenovirus E4 gene. This Homo sapiens (Human) protein is GA-binding protein subunit beta-1 (GABPB1).